The primary structure comprises 65 residues: UPF0434 protein CPS_2127 (65 aa).

Belongs to the UPF0434 family.

In Colwellia psychrerythraea (strain 34H / ATCC BAA-681) (Vibrio psychroerythus), this protein is UPF0434 protein CPS_2127.